We begin with the raw amino-acid sequence, 118 residues long: Basic phospholipase A2 3 (118 aa).

7 cysteine pairs are disulfide-bonded: Cys11–Cys71, Cys27–Cys117, Cys29–Cys45, Cys44–Cys98, Cys51–Cys91, Cys60–Cys84, and Cys78–Cys89. Ca(2+) contacts are provided by Tyr28, Gly30, and Gly32. His48 is a catalytic residue. Asp49 serves as a coordination point for Ca(2+). Asp92 is an active-site residue.

Belongs to the phospholipase A2 family. Group I subfamily. D49 sub-subfamily. As to quaternary structure, monomer. The cofactor is Ca(2+). As to expression, expressed by the venom gland.

It is found in the secreted. The enzyme catalyses a 1,2-diacyl-sn-glycero-3-phosphocholine + H2O = a 1-acyl-sn-glycero-3-phosphocholine + a fatty acid + H(+). In terms of biological role, PLA2 catalyzes the calcium-dependent hydrolysis of the 2-acyl groups in 3-sn-phosphoglycerides. This chain is Basic phospholipase A2 3, found in Laticauda semifasciata (Black-banded sea krait).